The following is a 298-amino-acid chain: Aspartate carbamoyltransferase catalytic subunit (298 aa).

Carbamoyl phosphate contacts are provided by Arg-50 and Thr-51. Lys-79 contacts L-aspartate. Carbamoyl phosphate contacts are provided by Arg-100, His-128, and Gln-131. L-aspartate-binding residues include Arg-161 and Arg-220. Carbamoyl phosphate-binding residues include Leu-259 and Pro-260.

Belongs to the aspartate/ornithine carbamoyltransferase superfamily. ATCase family. In terms of assembly, heterooligomer of catalytic and regulatory chains.

The enzyme catalyses carbamoyl phosphate + L-aspartate = N-carbamoyl-L-aspartate + phosphate + H(+). It functions in the pathway pyrimidine metabolism; UMP biosynthesis via de novo pathway; (S)-dihydroorotate from bicarbonate: step 2/3. In terms of biological role, catalyzes the condensation of carbamoyl phosphate and aspartate to form carbamoyl aspartate and inorganic phosphate, the committed step in the de novo pyrimidine nucleotide biosynthesis pathway. The chain is Aspartate carbamoyltransferase catalytic subunit from Sulfurisphaera tokodaii (strain DSM 16993 / JCM 10545 / NBRC 100140 / 7) (Sulfolobus tokodaii).